A 120-amino-acid polypeptide reads, in one-letter code: U3-hexatoxin-Hi1a (120 aa).

Positions 1 to 19 are cleaved as a signal peptide; that stretch reads MKLLYFFVVITVLVAVAAA. The propeptide occupies 20–51; that stretch reads LPAKTEEQIAAEENQLVEDLVQYAGTRLTRKR.

It belongs to the neurotoxin 25 family. F7 subfamily. Contains 4 disulfide bonds. In terms of tissue distribution, expressed by the venom gland.

It is found in the secreted. Weak insecticidal toxin with probable ion channel impairing activity. In vivo, induces paralysis when injected into sheep blowflies (L.cuprina). Shows weak toxicity, since it is only toxic at high doses, and flies recover within 24 hours. The sequence is that of U3-hexatoxin-Hi1a from Hadronyche infensa (Fraser island funnel-web spider).